The sequence spans 288 residues: uncharacterized protein (288 aa).

The 77-residue stretch at glycine 5–lysine 81 folds into the HTH rpiR-type domain. A DNA-binding region (H-T-H motif) is located at residues leucine 41–arginine 60. The 141-residue stretch at valine 129–aspartate 269 folds into the SIS domain.

This is an uncharacterized protein from Haemophilus influenzae (strain ATCC 51907 / DSM 11121 / KW20 / Rd).